The primary structure comprises 214 residues: ATP phosphoribosyltransferase (214 aa).

The protein belongs to the ATP phosphoribosyltransferase family. Short subfamily. Heteromultimer composed of HisG and HisZ subunits.

The protein localises to the cytoplasm. The catalysed reaction is 1-(5-phospho-beta-D-ribosyl)-ATP + diphosphate = 5-phospho-alpha-D-ribose 1-diphosphate + ATP. It functions in the pathway amino-acid biosynthesis; L-histidine biosynthesis; L-histidine from 5-phospho-alpha-D-ribose 1-diphosphate: step 1/9. In terms of biological role, catalyzes the condensation of ATP and 5-phosphoribose 1-diphosphate to form N'-(5'-phosphoribosyl)-ATP (PR-ATP). Has a crucial role in the pathway because the rate of histidine biosynthesis seems to be controlled primarily by regulation of HisG enzymatic activity. The chain is ATP phosphoribosyltransferase from Streptococcus sanguinis (strain SK36).